Reading from the N-terminus, the 581-residue chain is Probable CDP-diacylglycerol--glycerol-3-phosphate 3-phosphatidyltransferase (581 aa).

Residues 27 to 65 (RSATTTTTTTTKACGNGSSQSPPSTPLLSSKSSTITSNK) form a disordered region. The span at 44–65 (SSQSPPSTPLLSSKSSTITSNK) shows a compositional bias: low complexity. 160-167 (ASLYLGTS) contacts ATP. PLD phosphodiesterase domains lie at 248–274 (TIGVQHIKTYIFDDDLLLSGANLSKDY) and 487–520 (DKWTYHAKGLWIQVKNQQHPSITLIGSPNFGSRS). Residues His253, Lys255, and Asp260 contribute to the active site.

This sequence belongs to the CDP-alcohol phosphatidyltransferase class-II family.

It catalyses the reaction a CDP-1,2-diacyl-sn-glycerol + sn-glycerol 3-phosphate = a 1,2-diacyl-sn-glycero-3-phospho-(1'-sn-glycero-3'-phosphate) + CMP + H(+). It functions in the pathway phospholipid metabolism; phosphatidylglycerol biosynthesis; phosphatidylglycerol from CDP-diacylglycerol: step 1/2. In terms of biological role, functions in the biosynthesis of the anionic phospholipids phosphatidylglycerol and cardiolipin. The sequence is that of Probable CDP-diacylglycerol--glycerol-3-phosphate 3-phosphatidyltransferase (pgs1) from Dictyostelium discoideum (Social amoeba).